Here is a 206-residue protein sequence, read N- to C-terminus: ATP phosphoribosyltransferase (206 aa).

It belongs to the ATP phosphoribosyltransferase family. Short subfamily. As to quaternary structure, heteromultimer composed of HisG and HisZ subunits.

It is found in the cytoplasm. It catalyses the reaction 1-(5-phospho-beta-D-ribosyl)-ATP + diphosphate = 5-phospho-alpha-D-ribose 1-diphosphate + ATP. It functions in the pathway amino-acid biosynthesis; L-histidine biosynthesis; L-histidine from 5-phospho-alpha-D-ribose 1-diphosphate: step 1/9. Functionally, catalyzes the condensation of ATP and 5-phosphoribose 1-diphosphate to form N'-(5'-phosphoribosyl)-ATP (PR-ATP). Has a crucial role in the pathway because the rate of histidine biosynthesis seems to be controlled primarily by regulation of HisG enzymatic activity. In Sulfurovum sp. (strain NBC37-1), this protein is ATP phosphoribosyltransferase.